The primary structure comprises 581 residues: Pyridine nucleotide-disulfide oxidoreductase domain-containing protein 2 (581 aa).

38 to 71 is a binding site for FAD; it reads VVIGAGHNGLVAAAYLQRLGVNTAVFERRHVIGG.

The protein belongs to the carotenoid/retinoid oxidoreductase family. As to quaternary structure, interacts with COX5B; this interaction may contribute to localize PYROXD2 to the inner face of the inner mitochondrial membrane.

It is found in the mitochondrion matrix. Functionally, probable oxidoreductase that may play a role as regulator of mitochondrial function. This chain is Pyridine nucleotide-disulfide oxidoreductase domain-containing protein 2, found in Rattus norvegicus (Rat).